A 2544-amino-acid chain; its full sequence is Highly reducing polyketide synthase pkhB (2544 aa).

One can recognise a Ketosynthase family 3 (KS3) domain in the interval 9 to 438 (SEPIAIIGMS…GTNAHVILES (430 aa)). Active-site for beta-ketoacyl synthase activity residues include cysteine 182, histidine 317, and histidine 358. The segment at 566–876 (VFTGQVFRRS…PYWGCLVRDE (311 aa)) is malonyl-CoA:ACP transacylase (MAT) domain. The segment at 948–1082 (HELLGMPVAG…GMVGIEESAV (135 aa)) is N-terminal hotdog fold. The tract at residues 948–1252 (HELLGMPVAG…VELAALGRGS (305 aa)) is dehydratase (DH) domain. Residues 948 to 1254 (HELLGMPVAG…LAALGRGSSA (307 aa)) form the PKS/mFAS DH domain. Histidine 980 acts as the Proton acceptor; for dehydratase activity in catalysis. Positions 1095 to 1254 (YTRQPNPQDL…LAALGRGSSA (160 aa)) are C-terminal hotdog fold. Aspartate 1165 acts as the Proton donor; for dehydratase activity in catalysis. Positions 1398–1573 (SSLRQLSALL…FSGLDLEIYD (176 aa)) are methyltransferase (CMet) domain. The interval 1826–2142 (GHLGTLAFAE…TGDQMGKVVL (317 aa)) is enoyl reductase (ER) domain. The segment at 2169-2356 (ASYLIVGGVG…GVAIDLGPIS (188 aa)) is ketoreductase (KR) domain. A Carrier domain is found at 2462-2539 (EGARLIGAAI…ALAGLVAEKS (78 aa)). Serine 2499 carries the post-translational modification O-(pantetheine 4'-phosphoryl)serine.

Pantetheine 4'-phosphate is required as a cofactor.

It participates in secondary metabolite biosynthesis. In terms of biological role, highly reducing polyketide synthase; part of the pkh gene cluster that mediates the biosynthesis of 2,4-dihydroxy-6-[(3E,5E,7E)-2-oxonona-3,5,7-trienyl]benzaldehyde. The highly reducing polyketide synthase pkhB first produces the (2E,4E,6E)-octa-2,4,6-trienyl strater unit for the non-reducing polyketide synthase pkhA. This octatrienoyl starter is then loaded onto the SAT domain of the NR-PKS pkhA to be condensed with 4 malonyl-CoA units to yield 2,4-dihydroxy-6-[(3E,5E,7E)-2-oxonona-3,5,7-trienyl]benzaldehyde. This is Highly reducing polyketide synthase pkhB from Emericella nidulans (strain FGSC A4 / ATCC 38163 / CBS 112.46 / NRRL 194 / M139) (Aspergillus nidulans).